The chain runs to 293 residues: Protease HtpX (293 aa).

Transmembrane regions (helical) follow at residues 4-24 and 34-54; these read IALF…VLSL and GLLI…LLMS. Position 139 (His-139) interacts with Zn(2+). Glu-140 is a catalytic residue. Residue His-143 participates in Zn(2+) binding. The next 2 helical transmembrane spans lie at 158–178 and 193–213; these read VVNT…AGFL and LIYF…ASII. A Zn(2+)-binding site is contributed by Glu-222.

The protein belongs to the peptidase M48B family. Requires Zn(2+) as cofactor.

The protein resides in the cell inner membrane. The polypeptide is Protease HtpX (Salmonella agona (strain SL483)).